A 356-amino-acid chain; its full sequence is UDP-N-acetylglucosamine--N-acetylmuramyl-(pentapeptide) pyrophosphoryl-undecaprenol N-acetylglucosamine transferase (356 aa).

UDP-N-acetyl-alpha-D-glucosamine is bound by residues 15–17 (TGG), N127, R163, S191, I244, 263–268 (ALTVSE), and Q288.

Belongs to the glycosyltransferase 28 family. MurG subfamily.

The protein localises to the cell inner membrane. It catalyses the reaction di-trans,octa-cis-undecaprenyl diphospho-N-acetyl-alpha-D-muramoyl-L-alanyl-D-glutamyl-meso-2,6-diaminopimeloyl-D-alanyl-D-alanine + UDP-N-acetyl-alpha-D-glucosamine = di-trans,octa-cis-undecaprenyl diphospho-[N-acetyl-alpha-D-glucosaminyl-(1-&gt;4)]-N-acetyl-alpha-D-muramoyl-L-alanyl-D-glutamyl-meso-2,6-diaminopimeloyl-D-alanyl-D-alanine + UDP + H(+). Its pathway is cell wall biogenesis; peptidoglycan biosynthesis. Its function is as follows. Cell wall formation. Catalyzes the transfer of a GlcNAc subunit on undecaprenyl-pyrophosphoryl-MurNAc-pentapeptide (lipid intermediate I) to form undecaprenyl-pyrophosphoryl-MurNAc-(pentapeptide)GlcNAc (lipid intermediate II). The sequence is that of UDP-N-acetylglucosamine--N-acetylmuramyl-(pentapeptide) pyrophosphoryl-undecaprenol N-acetylglucosamine transferase from Yersinia pestis (strain Pestoides F).